A 134-amino-acid polypeptide reads, in one-letter code: Small ribosomal subunit protein uS9 (134 aa).

Residues 109–134 (DARRTEPHKPSKSSKGPRAKRQKSYR) are disordered. A compositionally biased stretch (basic residues) spans 118–134 (PSKSSKGPRAKRQKSYR).

The protein belongs to the universal ribosomal protein uS9 family.

The chain is Small ribosomal subunit protein uS9 from Methanococcus maripaludis (strain C5 / ATCC BAA-1333).